Reading from the N-terminus, the 124-residue chain is Small ribosomal subunit protein eS6 (124 aa).

It belongs to the eukaryotic ribosomal protein eS6 family.

The chain is Small ribosomal subunit protein eS6 from Methanococcus maripaludis (strain C6 / ATCC BAA-1332).